A 160-amino-acid polypeptide reads, in one-letter code: SsrA-binding protein (160 aa).

Belongs to the SmpB family.

The protein resides in the cytoplasm. Required for rescue of stalled ribosomes mediated by trans-translation. Binds to transfer-messenger RNA (tmRNA), required for stable association of tmRNA with ribosomes. tmRNA and SmpB together mimic tRNA shape, replacing the anticodon stem-loop with SmpB. tmRNA is encoded by the ssrA gene; the 2 termini fold to resemble tRNA(Ala) and it encodes a 'tag peptide', a short internal open reading frame. During trans-translation Ala-aminoacylated tmRNA acts like a tRNA, entering the A-site of stalled ribosomes, displacing the stalled mRNA. The ribosome then switches to translate the ORF on the tmRNA; the nascent peptide is terminated with the 'tag peptide' encoded by the tmRNA and targeted for degradation. The ribosome is freed to recommence translation, which seems to be the essential function of trans-translation. The polypeptide is SsrA-binding protein (Cronobacter sakazakii (strain ATCC BAA-894) (Enterobacter sakazakii)).